The chain runs to 114 residues: MEYVYAALILNEADEELTEDNITGVLEAAGVDVEESRAKALVAALEDVDIEEAVEEAAAAPAAAPAASGSDDEAAADDGDDDEEADADEAAEAEDAGDDDDEEPSGEGLGDLFG.

The segment at 55–114 (EEAAAAPAAAPAASGSDDEAAADDGDDDEEADADEAAEAEDAGDDDDEEPSGEGLGDLFG) is disordered. The segment covering 56-69 (EAAAAPAAAPAASG) has biased composition (low complexity). Residues 70 to 105 (SDDEAAADDGDDDEEADADEAAEAEDAGDDDDEEPS) are compositionally biased toward acidic residues.

This sequence belongs to the eukaryotic ribosomal protein P1/P2 family. In terms of assembly, part of the 50S ribosomal subunit. Homodimer, it forms part of the ribosomal stalk which helps the ribosome interact with GTP-bound translation factors. Forms a heptameric uL10/P0(P1)2(P1)2(P1)2 complex, where uL10/P0 forms an elongated spine to which the P1 dimers bind in a sequential fashion.

In terms of biological role, forms part of the ribosomal stalk, playing a central role in the interaction of the ribosome with GTP-bound translation factors. The polypeptide is Large ribosomal subunit protein P1 (Halobacterium salinarum (strain ATCC 700922 / JCM 11081 / NRC-1) (Halobacterium halobium)).